Reading from the N-terminus, the 333-residue chain is Ornithine carbamoyltransferase (333 aa).

Carbamoyl phosphate-binding positions include 57 to 60 (STRT), Arg108, and 135 to 138 (HPTQ). L-ornithine-binding positions include Asn168, Asp232, and 236 to 237 (SM). Carbamoyl phosphate-binding positions include 274–275 (CL) and Arg319.

This sequence belongs to the aspartate/ornithine carbamoyltransferase superfamily. OTCase family.

The protein resides in the cytoplasm. It catalyses the reaction carbamoyl phosphate + L-ornithine = L-citrulline + phosphate + H(+). It functions in the pathway amino-acid degradation; L-arginine degradation via ADI pathway; carbamoyl phosphate from L-arginine: step 2/2. Reversibly catalyzes the transfer of the carbamoyl group from carbamoyl phosphate (CP) to the N(epsilon) atom of ornithine (ORN) to produce L-citrulline. The polypeptide is Ornithine carbamoyltransferase (Pediococcus pentosaceus (strain ATCC 25745 / CCUG 21536 / LMG 10740 / 183-1w)).